The primary structure comprises 395 residues: Inner membrane protein YjgN (395 aa).

Residues 1 to 24 lie on the Cytoplasmic side of the membrane; it reads MNNVISSKDNHNHTLVFTGKGGKY. The chain crosses the membrane as a helical span at residues 25–45; it reads FVICLVNFLLTCITLGIYAPW. Residues 46-71 are Periplasmic-facing; it reads AMVKCRRYIYTNMTLNNQPFAYKATG. The chain crosses the membrane as a helical span at residues 72–92; the sequence is GALFISVLLVFIIYIVSLSLI. Residues 93–95 lie on the Cytoplasmic side of the membrane; it reads EHG. A helical membrane pass occupies residues 96-116; sequence HPGLGFTLFGLLIAIIPFMAV. Over 117–146 the chain is Periplasmic; sequence KGLQYQAMMTSLNGVHFGFQCSMRRAWWYM. A helical transmembrane segment spans residues 147–167; it reads FALPVLLMVALYIVLYIISLV. T168 is a topological domain (cytoplasmic). The chain crosses the membrane as a helical span at residues 169 to 189; the sequence is IAVGGLVFSIVFLGLLAIIGI. The Periplasmic portion of the chain corresponds to 190–229; it reads GVINGITYSKWMTLFGNGANFGIHRFSIQVNVKTCIRGCV. A helical transmembrane segment spans residues 230-250; that stretch reads LAMLTLFPFAVVIGYLIAPVF. Residues 251 to 275 are Cytoplasmic-facing; that stretch reads TDMILLSMMGNAQAGGALILQYYGQ. Residues 276-296 traverse the membrane as a helical segment; sequence IMACYFLYFLAIIVVTSYLYV. Over 297 to 327 the chain is Periplasmic; that stretch reads ALRNLFLNNLSLANDSIRFHSSVTAHGMLWR. The chain crosses the membrane as a helical span at residues 328–348; sequence LLVVFVISGVTLGLAYPWLKI. At 349–395 the chain is on the cytoplasmic side; sequence WLVSWLAQNTQVQGDLDSLELTNDEKPLENSPLMWISRGIMPYFPFI.

The protein localises to the cell inner membrane. The polypeptide is Inner membrane protein YjgN (yjgN) (Salmonella typhimurium (strain LT2 / SGSC1412 / ATCC 700720)).